The primary structure comprises 223 residues: 2-C-methyl-D-erythritol 4-phosphate cytidylyltransferase (223 aa).

Belongs to the IspD/TarI cytidylyltransferase family. IspD subfamily.

It catalyses the reaction 2-C-methyl-D-erythritol 4-phosphate + CTP + H(+) = 4-CDP-2-C-methyl-D-erythritol + diphosphate. It participates in isoprenoid biosynthesis; isopentenyl diphosphate biosynthesis via DXP pathway; isopentenyl diphosphate from 1-deoxy-D-xylulose 5-phosphate: step 2/6. Functionally, catalyzes the formation of 4-diphosphocytidyl-2-C-methyl-D-erythritol from CTP and 2-C-methyl-D-erythritol 4-phosphate (MEP). In Prochlorococcus marinus subsp. pastoris (strain CCMP1986 / NIES-2087 / MED4), this protein is 2-C-methyl-D-erythritol 4-phosphate cytidylyltransferase.